A 1069-amino-acid chain; its full sequence is Calcium-transporting ATPase 10, plasma membrane-type (1069 aa).

Positions 1–29 are disordered; the sequence is MSGQFNNSPRGEDKDVEAGTSSFTEYEDS. Ser-2 is subject to N-acetylserine. Over 2–180 the chain is Cytoplasmic; the sequence is SGQFNNSPRG…NTYPQKKGRS (179 aa). An interaction with calmodulin region spans residues 42–53; sequence ERLRRWRQAALV. The helical transmembrane segment at 181–201 threads the bilayer; the sequence is FWRFVWEASQDLTLIILIVAA. Topologically, residues 202–219 are lumenal; that stretch reads VASLALGIKTEGIEKGWY. A helical membrane pass occupies residues 220-240; it reads DGISIAFAVLLVIVVTATSDY. At 241–369 the chain is on the cytoplasmic side; sequence RQSLQFQNLN…GGETPLQVRL (129 aa). A helical membrane pass occupies residues 370-389; it reads NGVATFIGIVGLTVAGVVLF. Over 390 to 426 the chain is Lumenal; sequence VLVVRYFTGHTKNEQGGPQFIGGKTKFEHVLDDLVEI. Residues 427 to 444 form a helical membrane-spanning segment; it reads FTVAVTIVVVAVPEGLPL. Topologically, residues 445–844 are cytoplasmic; the sequence is AVTLTLAYSM…RWGRSVYANI (400 aa). Asp-482 acts as the 4-aspartylphosphate intermediate in catalysis. Mg(2+) contacts are provided by Asp-789 and Asp-793. Residues 845-863 form a helical membrane-spanning segment; that stretch reads QKFIQFQLTVNVAALVINV. Over 864-874 the chain is Lumenal; that stretch reads VAAISAGEVPL. A helical membrane pass occupies residues 875 to 895; sequence TAVQLLWVNLIMDTLGALALA. Over 896-915 the chain is Cytoplasmic; sequence TEPPTDHLMDRAPVGRREPL. A helical membrane pass occupies residues 916-938; it reads ITNIMWRNLFIQAMYQVTVLLIL. Topologically, residues 939–951 are lumenal; the sequence is NFRGISILHLKSK. A helical membrane pass occupies residues 952-973; sequence PNAERVKNTVIFNAFVICQVFN. Topologically, residues 974–991 are cytoplasmic; it reads EFNARKPDEINIFRGVLR. Residues 992–1013 form a helical membrane-spanning segment; the sequence is NHLFVGIISITIVLQVVIVEFL. The Lumenal segment spans residues 1014 to 1023; the sequence is GTFASTTKLD. A helical membrane pass occupies residues 1024–1045; that stretch reads WEMWLVCIGIGSISWPLAVIGK. Topologically, residues 1046 to 1069 are cytoplasmic; it reads LIPVPETPVSQYFRINRWRRNSSG.

This sequence belongs to the cation transport ATPase (P-type) (TC 3.A.3) family. Type IIB subfamily.

Its subcellular location is the membrane. It carries out the reaction Ca(2+)(in) + ATP + H2O = Ca(2+)(out) + ADP + phosphate + H(+). Its activity is regulated as follows. Activated by calmodulin. Its function is as follows. This magnesium-dependent enzyme catalyzes the hydrolysis of ATP coupled with the translocation of calcium from the cytosol into the endoplasmic reticulum. The polypeptide is Calcium-transporting ATPase 10, plasma membrane-type (ACA10) (Arabidopsis thaliana (Mouse-ear cress)).